Reading from the N-terminus, the 444-residue chain is 4-O-dimethylallyl-L-tyrosine synthase (444 aa).

It belongs to the tryptophan dimethylallyltransferase family. As to quaternary structure, homodimer.

The enzyme catalyses L-tyrosine + dimethylallyl diphosphate = 4-O-dimethylallyl-L-tyrosine + diphosphate. 4-O-dimethylallyl-L-tyrosine synthase; part of the gene cluster that mediates the biosynthesis of an unusual class of epipolythiodioxopiperazines (ETPs) lacking the reactive thiol group important for toxicity. Firstly, L-tyrosine is prenylated by tcpD, before undergoing condensation with L-glycine in a reaction catalyzed by the NRPS tcpP leading to the diketopiperazine (DKP) backbone. Afterwards the alpha-carbon of tyrosine is oxidized by the cytochrome P450 tcpC to form a hydroxyl group. However, in contrast other ETP biosynthesis pathways studied so far, tcpC is not able to bishydroxylate the DKP at both alpha-carbon positions, but hydroxylates the alpha-carbon of the tyrosine part and the nitrogen of the glycine part. The next steps involve an alpha,beta-elimination reaction catalyzed by tcpI, a methylation by the methyltransferase tcpN the action of the four enzyme cascade tcpG/K/J/I. Due to a dysfunctional cytochrome P450 monooxygenase tcpC, the pathway leads to the biosynthesis of probable non-toxic metabolites lacking the reactive thiol group. The protein is 4-O-dimethylallyl-L-tyrosine synthase of Claviceps purpurea (strain 20.1) (Ergot fungus).